Reading from the N-terminus, the 136-residue chain is uncharacterized protein (136 aa).

This is an uncharacterized protein from Fowl adenovirus A serotype 1 (strain CELO / Phelps) (FAdV-1).